Here is a 101-residue protein sequence, read N- to C-terminus: MSDYFEEVMRKLTIEDVSILGWLFQNEANAVFKAIKKSSIADELEYSTANFRKTLNKLEAIHFIGTVTGGKEHKLYLTEYGQQAVQQAIHHGEENEEVEEI.

In terms of assembly, homodimer. Dimers bind to DNA, forming a protein-bound filament which may form a helix around the TubZ filament.

Functionally, a DNA-binding protein that is part of the type III plasmid partition system used to ensure correct segregation of the pBM400 plasmid. Binds the plasmid origin of replication, probably cooperatively, forming a ring or short helix with external DNA. Its effect on RNA expression has not been shown. In Priestia megaterium (strain ATCC 12872 / QMB1551) (Bacillus megaterium), this protein is DNA-binding protein TubR.